Here is a 131-residue protein sequence, read N- to C-terminus: Thrombocorticin (131 aa).

An intrachain disulfide couples C3 to C111. Residues 28–60 are disordered; sequence RNESVEVKDSNGNTVSRGSGSSSSGGTFTVINM. The segment covering 37-54 has biased composition (low complexity); the sequence is SNGNTVSRGSGSSSSGGT. The Pseudodomain-swapping motif signature appears at 117–131; it reads DFNDVFVLITGLVRG.

Functionally, binds to fucose and mannose in a calcium-dependent manner (in vitro). Acts as an agonist for human thrombopoietin receptor MPL (in vitro). Binding of sugar-moieties may promote the interaction with human MPL on the cell surface (in vitro). Catalyzes MPL dimerization and activation, and modulates internalization of the receptor (in vitro). Exhibits proliferation activity in murine recombinant Ba/F3 cells expressing human MPL (Ba/F3-huMPL) (in vitro). Induces phosphorylation of STAT5 in recombinant Ba/F3-huMPL cells, possibly by stimulating MPL on the cell surface to transduce signals via Jak/STAT signaling pathway (in vitro). Does not aggregate rabbit erythrocytes, indicating absent lectin-like agglutination activity (in vitro). In Corticium sp. (Marine sponge), this protein is Thrombocorticin.